We begin with the raw amino-acid sequence, 329 residues long: Deoxyhypusine hydroxylase (329 aa).

HEAT-like PBS-type repeat units follow at residues 65-91 (LKHE…VLED), 99-124 (RHEA…MRDD), 232-258 (FRHE…ALSN), and 265-292 (VRHE…FLND). The Fe cation site is built by histidine 67, glutamate 68, histidine 100, glutamate 101, histidine 234, glutamate 235, histidine 267, and glutamate 268.

This sequence belongs to the deoxyhypusine hydroxylase family. Fe(2+) is required as a cofactor.

It localises to the cytoplasm. Its subcellular location is the nucleus. It carries out the reaction [eIF5A protein]-deoxyhypusine + AH2 + O2 = [eIF5A protein]-hypusine + A + H2O. It functions in the pathway protein modification; eIF5A hypusination. Functionally, catalyzes the hydroxylation of the N(6)-(4-aminobutyl)-L-lysine intermediate to form hypusine, an essential post-translational modification only found in mature eIF-5A factor. The chain is Deoxyhypusine hydroxylase from Phaeosphaeria nodorum (strain SN15 / ATCC MYA-4574 / FGSC 10173) (Glume blotch fungus).